The following is a 195-amino-acid chain: Myelin-associated neurite-outgrowth inhibitor (195 aa).

Met1 carries the post-translational modification N-acetylmethionine. Residues 1–18 (MNPVYSPGSSGVPYANAK) lie on the Cytoplasmic side of the membrane. Phosphoserine is present on Ser6. Residues 19 to 42 (GIGYPAGFPMGYAAAAPAYSPNMY) traverse the membrane as a helical segment. Topologically, residues 43–142 (PGANPTFQTG…PAPIPPPRGN (100 aa)) are extracellular. An N-linked (GlcNAc...) asparagine glycan is attached at Asn46. A helical transmembrane segment spans residues 143 to 164 (GVTMGMVAGTTMAMSAGTLLTA). The Cytoplasmic portion of the chain corresponds to 165–195 (HSPTPVAPHPVTVPTYRAPGTPTYSYVPPQW).

Belongs to the FAM168 family. As to quaternary structure, may form homodimers. May interact with DAZAP2, FAM168A, PRDX6, RBM6, TMTC1 and YPEL2. Interacts with CDC27. Post-translationally, N-glycosylated. As to expression, expressed in the brain, within neuronal axonal fibers and associated with myelin sheets (at protein level). Expression tends to be lower in the brain of Alzheimer disease patients compared to healthy individuals (at protein level).

It localises to the cytoplasm. The protein resides in the perinuclear region. Its subcellular location is the cell membrane. It is found in the cell projection. The protein localises to the axon. Functionally, inhibitor of neuronal axonal outgrowth. Acts as a negative regulator of CDC42 and STAT3 and a positive regulator of STMN2. Positive regulator of CDC27. The chain is Myelin-associated neurite-outgrowth inhibitor (FAM168B) from Homo sapiens (Human).